The sequence spans 173 residues: MNIAPDSKVKTSLVLQMQNYFRSLPLNRGSVILDHYIQCLLRVLTAEEGVSMEQKVSDIESSLARCLQADEQQKNWAFRNLILYKIWENNLGNQPNVDPLRALYIIVAEYAFIKLLTAASVHERGRLEWDDVTNIVYSFHSRSQHNSEVAKNFHRHIETVRTGDDLSMIHLLT.

It belongs to the FliB family.

Its function is as follows. Required for the secretion of flagellin and expression of motility. In Salmonella muenchen, this protein is Flagellar biosynthetic protein FliV (fliV).